We begin with the raw amino-acid sequence, 1368 residues long: DNA-directed RNA polymerase subunit beta (1368 aa).

This sequence belongs to the RNA polymerase beta chain family. The RNAP catalytic core consists of 2 alpha, 1 beta, 1 beta' and 1 omega subunit. When a sigma factor is associated with the core the holoenzyme is formed, which can initiate transcription.

The catalysed reaction is RNA(n) + a ribonucleoside 5'-triphosphate = RNA(n+1) + diphosphate. Its function is as follows. DNA-dependent RNA polymerase catalyzes the transcription of DNA into RNA using the four ribonucleoside triphosphates as substrates. The protein is DNA-directed RNA polymerase subunit beta of Legionella pneumophila (strain Paris).